Reading from the N-terminus, the 266-residue chain is Tryptophan synthase alpha chain (266 aa).

Residues glutamate 47 and aspartate 58 each act as proton acceptor in the active site.

The protein belongs to the TrpA family. As to quaternary structure, tetramer of two alpha and two beta chains.

It localises to the plastid. The protein localises to the chloroplast. It carries out the reaction (1S,2R)-1-C-(indol-3-yl)glycerol 3-phosphate + L-serine = D-glyceraldehyde 3-phosphate + L-tryptophan + H2O. The protein operates within amino-acid biosynthesis; L-tryptophan biosynthesis; L-tryptophan from chorismate: step 5/5. The alpha subunit is responsible for the aldol cleavage of indoleglycerol phosphate to indole and glyceraldehyde 3-phosphate. The sequence is that of Tryptophan synthase alpha chain from Cyanidium caldarium (Red alga).